A 278-amino-acid chain; its full sequence is Octanoyltransferase LipM (278 aa).

Residues 33-248 (KKIPPVIRFY…GFETGLNIHL (216 aa)) form the BPL/LPL catalytic domain. The active-site Acyl-thioester intermediate is the C150.

Belongs to the octanoyltransferase LipM family. As to quaternary structure, monomer.

It carries out the reaction octanoyl-[ACP] + L-lysyl-[protein] = N(6)-octanoyl-L-lysyl-[protein] + holo-[ACP] + H(+). Its pathway is protein modification; protein lipoylation via endogenous pathway; protein N(6)-(lipoyl)lysine from octanoyl-[acyl-carrier-protein]. In terms of biological role, catalyzes the transfer of endogenously produced octanoic acid from octanoyl-acyl-carrier-protein onto the lipoyl domain of GcvH, an intermediate carrier during protein lipoylation. Is also able to catalyze the reverse reaction. Octanoyl-CoA can also act as a substrate although very poorly. Does not display lipoate protein ligase activity, despite its sequence similarity to LplA. This Bacillus subtilis (strain 168) protein is Octanoyltransferase LipM (lipM).